Reading from the N-terminus, the 202-residue chain is MDFVSRPTTETAKALLGVKVIYEDEFQTYSGYIVETEAYLGFTDRAAHGFGGKQTPKVTSLYKRGGTIYGHVMHTHLLVNFVTQNEGVPEGVLIRAIEPLDGIEMMKHNRNKSGYELTNGPGKWTKAFNIPRAIDGATLNDCRLSIDTKHRKYPRDIVESARIGIPNKGDWTNKPLRYTVKGNPFVSHIRKSDCLNPDETWK.

It belongs to the DNA glycosylase MPG family.

The chain is Putative 3-methyladenine DNA glycosylase from Staphylococcus haemolyticus (strain JCSC1435).